We begin with the raw amino-acid sequence, 538 residues long: Zinc finger protein with KRAB and SCAN domains 3 (538 aa).

S42 bears the Phosphoserine mark. The region spanning 46-128 is the SCAN box domain; sequence RERFRGFRYP…VLLEYLERQL (83 aa). A Glycyl lysine isopeptide (Lys-Gly) (interchain with G-Cter in SUMO2) cross-link involves residue K171. T207 is subject to Phosphothreonine. In terms of domain architecture, KRAB spans 214 to 274; the sequence is LKVEDVALTL…PAEELPEKEH (61 aa). Residues 226-236 are compositionally biased toward polar residues; it reads EWTQQDSSQGN. A disordered region spans residues 226 to 274; the sequence is EWTQQDSSQGNLCRDEKQENHGSLVSLGDEKQTKSRDLPPAEELPEKEH. The segment covering 253-274 has biased composition (basic and acidic residues); that stretch reads GDEKQTKSRDLPPAEELPEKEH. 5 C2H2-type zinc fingers span residues 314–336, 342–364, 370–392, 398–420, and 426–448; these read HICHECGKSFAQSSGLSKHRRIH, YECEECGKAFIGSSALVIHQRVH, YECEECGKAFSHSSDLIKHQRTH, YECDDCGKTFSQSCSLLEHHRIH, and YQCSMCGKAFRRSSHLLRHQRIH. A Phosphothreonine modification is found at T449. 2 C2H2-type zinc fingers span residues 480 to 502 and 508 to 530; these read YKCNECERSFTQNTGLIEHQKIH and YQCNACGKGFTRISYLVQHQRSH.

This sequence belongs to the krueppel C2H2-type zinc-finger protein family.

It localises to the nucleus. Its subcellular location is the cytoplasm. In terms of biological role, transcriptional factor that binds to the consensus sequence 5'-[GT][AG][AGT]GGGG-3' and acts as a repressor of autophagy. Specifically represses expression of genes involved in autophagy and lysosome biogenesis/function such as MAP1LC3B, ULK1 or WIPI2. Associates with chromatin at the ITGB4 and VEGF promoters. Also acts as a transcription activator and promotes cancer cell progression and/or migration in various tumors and myelomas. The sequence is that of Zinc finger protein with KRAB and SCAN domains 3 (ZKSCAN3) from Homo sapiens (Human).